The sequence spans 239 residues: SH3 domain-binding glutamic acid-rich protein (239 aa).

The SH3-binding motif lies at Asn-124–Pro-130. The tract at residues Gly-159–Ser-239 is disordered. Basic and acidic residues predominate over residues Lys-167–Ser-185. Acidic residues predominate over residues Asn-198 to Ser-239.

This sequence belongs to the SH3BGR family. As to expression, expressed in heart and skeletal muscle.

The sequence is that of SH3 domain-binding glutamic acid-rich protein (SH3BGR) from Homo sapiens (Human).